The sequence spans 92 residues: Elongation factor 1-beta (92 aa).

It belongs to the EF-1-beta/EF-1-delta family.

Its function is as follows. Promotes the exchange of GDP for GTP in EF-1-alpha/GDP, thus allowing the regeneration of EF-1-alpha/GTP that could then be used to form the ternary complex EF-1-alpha/GTP/AAtRNA. This Pyrobaculum calidifontis (strain DSM 21063 / JCM 11548 / VA1) protein is Elongation factor 1-beta.